Here is a 113-residue protein sequence, read N- to C-terminus: Large ribosomal subunit protein uL22 (113 aa).

Belongs to the universal ribosomal protein uL22 family. In terms of assembly, part of the 50S ribosomal subunit.

Its function is as follows. This protein binds specifically to 23S rRNA; its binding is stimulated by other ribosomal proteins, e.g. L4, L17, and L20. It is important during the early stages of 50S assembly. It makes multiple contacts with different domains of the 23S rRNA in the assembled 50S subunit and ribosome. In terms of biological role, the globular domain of the protein is located near the polypeptide exit tunnel on the outside of the subunit, while an extended beta-hairpin is found that lines the wall of the exit tunnel in the center of the 70S ribosome. The protein is Large ribosomal subunit protein uL22 of Roseiflexus castenholzii (strain DSM 13941 / HLO8).